A 129-amino-acid polypeptide reads, in one-letter code: Large ribosomal subunit protein bL19 (129 aa).

Functionally, this protein is located at the 30S-50S ribosomal subunit interface and may play a role in the structure and function of the aminoacyl-tRNA binding site. This is Large ribosomal subunit protein bL19 from Rhodopseudomonas palustris (strain ATCC BAA-98 / CGA009).